A 429-amino-acid chain; its full sequence is Bifunctional protein GlmU (429 aa).

The tract at residues 1 to 223 (MKTSILILAA…EDEFMGINDK (223 aa)) is pyrophosphorylase. UDP-N-acetyl-alpha-D-glucosamine is bound by residues 8–11 (LAAG), K22, and 81–82 (GT). Residue D102 participates in Mg(2+) binding. UDP-N-acetyl-alpha-D-glucosamine is bound by residues G135, E149, N164, and N221. N221 lines the Mg(2+) pocket. The linker stretch occupies residues 224-244 (FELSIAENFMQKKIKKYWMQQ). The tract at residues 245–429 (GVIFHLPQST…KDYYYKKFQK (185 aa)) is N-acetyltransferase. Residues R308 and K325 each contribute to the UDP-N-acetyl-alpha-D-glucosamine site. The active-site Proton acceptor is H336. 2 residues coordinate UDP-N-acetyl-alpha-D-glucosamine: Y339 and N350. Acetyl-CoA contacts are provided by residues 359-360 (NY), S378, A396, and R413.

It in the N-terminal section; belongs to the N-acetylglucosamine-1-phosphate uridyltransferase family. The protein in the C-terminal section; belongs to the transferase hexapeptide repeat family. Homotrimer. Mg(2+) serves as cofactor.

It localises to the cytoplasm. It catalyses the reaction alpha-D-glucosamine 1-phosphate + acetyl-CoA = N-acetyl-alpha-D-glucosamine 1-phosphate + CoA + H(+). The catalysed reaction is N-acetyl-alpha-D-glucosamine 1-phosphate + UTP + H(+) = UDP-N-acetyl-alpha-D-glucosamine + diphosphate. Its pathway is nucleotide-sugar biosynthesis; UDP-N-acetyl-alpha-D-glucosamine biosynthesis; N-acetyl-alpha-D-glucosamine 1-phosphate from alpha-D-glucosamine 6-phosphate (route II): step 2/2. The protein operates within nucleotide-sugar biosynthesis; UDP-N-acetyl-alpha-D-glucosamine biosynthesis; UDP-N-acetyl-alpha-D-glucosamine from N-acetyl-alpha-D-glucosamine 1-phosphate: step 1/1. It functions in the pathway bacterial outer membrane biogenesis; LPS lipid A biosynthesis. Functionally, catalyzes the last two sequential reactions in the de novo biosynthetic pathway for UDP-N-acetylglucosamine (UDP-GlcNAc). The C-terminal domain catalyzes the transfer of acetyl group from acetyl coenzyme A to glucosamine-1-phosphate (GlcN-1-P) to produce N-acetylglucosamine-1-phosphate (GlcNAc-1-P), which is converted into UDP-GlcNAc by the transfer of uridine 5-monophosphate (from uridine 5-triphosphate), a reaction catalyzed by the N-terminal domain. This chain is Bifunctional protein GlmU, found in Campylobacter jejuni subsp. jejuni serotype O:2 (strain ATCC 700819 / NCTC 11168).